The sequence spans 95 residues: Small ribosomal subunit protein bS6 (95 aa).

The protein belongs to the bacterial ribosomal protein bS6 family.

Functionally, binds together with bS18 to 16S ribosomal RNA. The polypeptide is Small ribosomal subunit protein bS6 (Desulforamulus reducens (strain ATCC BAA-1160 / DSM 100696 / MI-1) (Desulfotomaculum reducens)).